The sequence spans 400 residues: CinA-like protein (400 aa).

This sequence belongs to the CinA family.

The chain is CinA-like protein from Escherichia coli (strain SMS-3-5 / SECEC).